We begin with the raw amino-acid sequence, 121 residues long: Ribosome-binding factor A (121 aa).

The protein belongs to the RbfA family. Monomer. Binds 30S ribosomal subunits, but not 50S ribosomal subunits or 70S ribosomes.

The protein localises to the cytoplasm. In terms of biological role, one of several proteins that assist in the late maturation steps of the functional core of the 30S ribosomal subunit. Associates with free 30S ribosomal subunits (but not with 30S subunits that are part of 70S ribosomes or polysomes). Required for efficient processing of 16S rRNA. May interact with the 5'-terminal helix region of 16S rRNA. The sequence is that of Ribosome-binding factor A from Agathobacter rectalis (strain ATCC 33656 / DSM 3377 / JCM 17463 / KCTC 5835 / VPI 0990) (Eubacterium rectale).